We begin with the raw amino-acid sequence, 810 residues long: Hemoglobin-haptoglobin utilization protein B (810 aa).

An N-terminal signal peptide occupies residues 1 to 22 (MPIPFKPVLAVAAIAQAFPAFA). The region spanning 34–166 (NEITVTGTHK…LGGAVNYQTK (133 aa)) is the TBDR plug domain. One can recognise a TBDR beta-barrel domain in the interval 175 to 810 (DKPYHLGIKG…SYNFTIEAKF (636 aa)). The TonB C-terminal box signature appears at 793 to 810 (QRFTSPGRSYNFTIEAKF).

This sequence belongs to the TonB-dependent receptor family.

It is found in the cell outer membrane. Acts as a receptor for hemoglobin or the hemoglobin/haptoglobin complex and is required for heme uptake. The chain is Hemoglobin-haptoglobin utilization protein B (hpuB) from Neisseria meningitidis serogroup C.